A 419-amino-acid chain; its full sequence is Peroxisome biogenesis factor 10 (419 aa).

Over 1–27 the chain is Peroxisomal matrix; sequence MPPSEEIKLRAVSPRPDFKANYLEFAN. Residues 28-57 form a helical membrane-spanning segment; it reads APAIVRANQKDSYFETVLRDKLQNVIQIFK. A topological domain (cytoplasmic) is located at residue G58. A helical membrane pass occupies residues 59 to 80; that stretch reads QRFTHTHPEEIGVAAKALYLSL. Residues 81 to 108 lie on the Peroxisomal matrix side of the membrane; sequence TTLLGTKTLGEEYVDLIYVSRDGKRIPR. The helical transmembrane segment at 109–141 threads the bilayer; it reads YLARAGFIFAYAILPYFLTRLFRRLKSSSTPKD. The Cytoplasmic segment spans residues 142-158; it reads EVTEEKINKELPISLRI. The chain crosses the membrane as a helical span at residues 159–185; that stretch reads EKYLSNMSYSKVLDTIMNLHIAVFYFS. Topologically, residues 186–215 are peroxisomal matrix; it reads GQFYNISKRFFSMRYAFGHKINKERTPNGN. Residues 216–235 traverse the membrane as a helical segment; the sequence is YELLGGLIVLQLVMKSLGGF. The Cytoplasmic segment spans residues 236–419; it reads KGLIGSFTGN…RTLGYFLVVF (184 aa). Zn(2+) contacts are provided by C298, C301, C313, H315, C318, C321, C334, and C347. The RING-type zinc finger occupies 298 to 360; sequence CMLCLSYMTN…FYIPTLNKIC (63 aa).

Belongs to the pex2/pex10/pex12 family. In terms of assembly, component of the peroxisomal translocation complex, composed of at least PEX3, PEX2, PEX10 and PEX12. Interacts with PEX19.

It is found in the peroxisome membrane. It carries out the reaction S-ubiquitinyl-[E2 ubiquitin-conjugating enzyme]-L-cysteine + [acceptor protein]-L-lysine = [E2 ubiquitin-conjugating enzyme]-L-cysteine + N(6)-ubiquitinyl-[acceptor protein]-L-lysine.. It functions in the pathway protein modification; protein ubiquitination. The E3 ubiquitin-protein ligase activity is stimulated by PEX12. Functionally, E3 ubiquitin-protein ligase component of the peroxisomal translocation complex. The two types of peroxisomal matrix targeting signals, PTS1 and PTS2, are first recognized in the cytosol by their receptors PEX5 and PEX7, respectively, which then carry the cargo to the peroxisomal membrane. The peroxisomal targeting signal (PTS) receptor-cargo complexes interact with peroxisomal membrane protein (PMP) components of the docking complex. They have then additional downstream interactions with the translocation complex, leading to the transport of fully folded and oligomerized cargo into the peroxisome matrix. The peroxisomal translocation complex forms the retrotranslocation channel with each subunit contributing transmembrane segments that coassemble into an open channel that specifically allows the passage of PEX5 and PEX20 through the peroxisomal membrane. Specifically catalyzes monoubiquitination of PEX5 and/or PEX20 at 'Cys-6' and 'Cys-8', respectively, a modification that acts as a signal for PEX5 or PEX20 export from peroxisomes to the cytosol, thereby promoting PEX5 and PEX20 recycling. This Komagataella pastoris (Yeast) protein is Peroxisome biogenesis factor 10.